The sequence spans 562 residues: Gut esterase 1 (562 aa).

A signal peptide spans 1–16 (MRIFLVSVILINACWA). An N-linked (GlcNAc...) asparagine; atypical glycan is attached at Asn73. A disulfide bridge connects residues Cys75 and Cys93. Ser198 (acyl-ester intermediate) is an active-site residue. Cys250 and Cys258 form a disulfide bridge. Active-site charge relay system residues include Glu319 and His452. Residues 559-562 (KDEL) carry the Prevents secretion from ER motif.

This sequence belongs to the type-B carboxylesterase/lipase family. Expressed only in the intestine.

Its subcellular location is the endoplasmic reticulum lumen. The enzyme catalyses a carboxylic ester + H2O = an alcohol + a carboxylate + H(+). The sequence is that of Gut esterase 1 (ges-1) from Caenorhabditis elegans.